The chain runs to 1453 residues: Collagen alpha-1(I) chain (1453 aa).

The signal sequence occupies residues 1–22 (MFSFVDLRLLLLLGATALLTHG). The propeptide at 23 to 151 (QEDIPEVSCI…PPGLGGNFAS (129 aa)) is N-terminal propeptide. The 59-residue stretch at 29–87 (VSCIHNGLRVPNGETWKPDVCLICICHNGTAVCDGVLCKEDLDCPNPQKREGECCPFCP) folds into the VWFC domain. N-linked (GlcNAc...) asparagine glycosylation is present at Asn-56. Residues 97–1206 (VIGVEGPKGD…KSQDGGRYYR (1110 aa)) are disordered. Composition is skewed to pro residues over residues 109–118 (PQGPRGPVGP) and 128–143 (PGLP…PGPP). Gln-152 carries the pyrrolidone carboxylic acid modification. The interval 152-167 (QMSYGYDEKSAGVSVP) is nonhelical region (N-terminal). Lys-160 is modified (allysine). Ser-161 carries the phosphoserine modification. The tract at residues 168–1181 (GPMGPSGPRG…PGPPGPPGPP (1014 aa)) is triple-helical region. Residues Pro-179, Pro-182, Pro-185, Pro-194, Pro-197, Pro-200, Pro-215, Pro-230, Pro-236, Pro-245, and Pro-251 each carry the 4-hydroxyproline modification. A compositionally biased stretch (low complexity) spans 187 to 206 (PQGFQGPPGEPGEPGASGPM). Residues 218 to 232 (NGDDGEAGKPGRPGE) show a composition bias toward basic and acidic residues. The residue at position 254 (Lys-254) is a 5-hydroxylysine; alternate. The O-linked (Gal...) hydroxylysine; alternate glycan is linked to Lys-254. Position 260 is a phosphoserine (Ser-260). Pro-278, Pro-281, Pro-287, Pro-296, and Pro-302 each carry 4-hydroxyproline. Residues 307 to 320 (SAGARGNDGAVGAA) are compositionally biased toward low complexity. Residues 322–334 (PPGPTGPTGPPGF) show a composition bias toward pro residues. Pro-323, Pro-332, Pro-335, Pro-362, Pro-365, Pro-377, Pro-383, Pro-392, Pro-398, Pro-401, and Pro-416 each carry 4-hydroxyproline. The span at 335-361 (PGAAGAKGEAGPQGARGSEGPQGVRGE) shows a compositional bias: low complexity. Low complexity predominate over residues 368–418 (AGAAGPAGNPGADGQPGAKGANGAPGIAGAPGFPGARGPSGPQGPSGAPGP). Lys-419 is modified (5-hydroxylysine). A 4-hydroxyproline mark is found at Pro-425, Pro-428, Pro-440, Pro-449, Pro-464, Pro-470, Pro-479, and Pro-485. The span at 474–483 (GERGGPGSRG) shows a compositional bias: gly residues. At Lys-494 the chain carries 5-hydroxylysine. 28 positions are modified to 4-hydroxyproline: Pro-503, Pro-512, Pro-518, Pro-524, Pro-533, Pro-536, Pro-545, Pro-554, Pro-560, Pro-572, Pro-581, Pro-590, Pro-593, Pro-611, Pro-629, Pro-635, Pro-641, Pro-647, Pro-653, Pro-659, Pro-671, Pro-680, Pro-692, Pro-704, Pro-707, Pro-713, Pro-719, and Pro-728. The segment covering 527 to 566 (KGLTGSPGSPGPDGKTGPPGPAGQDGRPGPAGPPGARGQA) has biased composition (low complexity). Low complexity predominate over residues 623 to 650 (QGPAGSPGFQGLPGPAGPPGEAGKPGEQ). Composition is skewed to low complexity over residues 685-695 (PRGNNGAPGND) and 703-716 (APGA…PGLQ). The Cell attachment site signature appears at 734-736 (RGD). Position 740 is a 5-hydroxylysine (Lys-740). 4-hydroxyproline is present on residues Pro-746, Pro-761, and Pro-767. Low complexity predominate over residues 773–787 (TGPSGPAGPTGARGA). Phosphoserine is present on Ser-776. 8 positions are modified to 4-hydroxyproline: Pro-788, Pro-794, Pro-797, Pro-806, Pro-812, Pro-830, Pro-839, and Pro-848. A compositionally biased stretch (low complexity) spans 800–815 (AGFAGPPGADGQPGAK). A compositionally biased stretch (pro residues) spans 829-841 (PPGPAGPAGPPGP). Positions 842 to 872 (IGNVGAPGPKGSRGAAGPPGATGFPGAAGRV) are enriched in low complexity. At Lys-851 the chain carries 5-hydroxylysine. 2 positions are modified to 4-hydroxyproline: Pro-860 and Pro-866. 3-hydroxyproline is present on Pro-874. 16 positions are modified to 4-hydroxyproline: Pro-875, Pro-884, Pro-887, Pro-908, Pro-917, Pro-926, Pro-935, Pro-953, Pro-962, Pro-965, Pro-971, Pro-986, Pro-992, Pro-998, Pro-1007, and Pro-1013. Over residues 901–910 (ETGPAGRPGE) the composition is skewed to low complexity. Residues 920 to 935 (AGEKGSPGADGPAGSP) show a composition bias toward low complexity. The span at 985-995 (PPGPMGPPGLA) shows a compositional bias: pro residues. Over residues 997–1012 (PPGESGREGSPGAEGS) the composition is skewed to low complexity. Lys-1022 carries the post-translational modification 5-hydroxylysine. The segment covering 1031 to 1046 (AGPPGAPGAPGAPGPV) has biased composition (pro residues). 4-hydroxyproline occurs at positions 1034, 1037, and 1040. Over residues 1067–1081 (IGPAGARGPAGPQGP) the composition is skewed to low complexity. Positions 1082–1084 (RGD) match the Cell attachment site motif. Over residues 1082 to 1096 (RGDKGETGEQGDRGI) the composition is skewed to basic and acidic residues. Lys-1085 carries the 5-hydroxylysine modification. A 5-hydroxylysine; alternate modification is found at Lys-1097. Lys-1097 is a glycosylation site (O-linked (Gal...) hydroxylysine; alternate). Over residues 1102 to 1148 (FSGLQGPPGSPGSPGEQGPSGASGPAGPRGPPGSAGSPGKDGLNGLP) the composition is skewed to low complexity. Residues Pro-1109, Pro-1112, Pro-1115, Pro-1133, and Pro-1148 each carry the 4-hydroxyproline modification. At Pro-1153 the chain carries 3-hydroxyproline. Pro-1154 is subject to 4-hydroxyproline. The segment covering 1166–1181 (AGPPGPPGPPGPPGPP) has biased composition (pro residues). Pro-1168 is subject to 3-hydroxyproline. A 4-hydroxyproline modification is found at Pro-1169. Pro-1171 bears the 3-hydroxyproline mark. Residue Pro-1172 is modified to 4-hydroxyproline. Pro-1174 is modified (3-hydroxyproline). 4-hydroxyproline is present on residues Pro-1175, Pro-1178, and Pro-1181. The tract at residues 1176 to 1186 (GPPGPPSGGYD) is major antigenic determinant (of neutral salt-extracted rat skin collagen). The segment at 1182–1207 (SGGYDFSFLPQPPQEKSQDGGRYYRA) is nonhelical region (C-terminal). Allysine is present on Lys-1197. Positions 1197 to 1206 (KSQDGGRYYR) are enriched in basic and acidic residues. The propeptide at 1208 to 1453 (DDANVVRDRD…GMDIGPACFV (246 aa)) is C-terminal propeptide. In terms of domain architecture, Fibrillar collagen NC1 spans 1218-1453 (LEVDTTLKSL…GMDIGPACFV (236 aa)). Intrachain disulfides connect Cys-1248–Cys-1280, Cys-1288–Cys-1451, and Cys-1359–Cys-1404. The Ca(2+) site is built by Asp-1266, Asn-1268, Gln-1269, Cys-1271, and Asp-1274. Asn-1354 carries an N-linked (GlcNAc...) asparagine glycan.

This sequence belongs to the fibrillar collagen family. In terms of assembly, trimers of one alpha 2(I) and two alpha 1(I) chains. Interacts with MRC2. Interacts with TRAM2. Interacts with MFAP4 in a Ca (2+)-dependent manner. In terms of processing, contains mostly 4-hydroxyproline. Proline residues at the third position of the tripeptide repeating unit (G-X-Y) are hydroxylated in some or all of the chains. Post-translationally, contains 3-hydroxyproline at a few sites. This modification occurs on the first proline residue in the sequence motif Gly-Pro-Hyp, where Hyp is 4-hydroxyproline. Lysine residues at the third position of the tripeptide repeating unit (G-X-Y) are 5-hydroxylated in some or all of the chains. In terms of processing, O-glycosylated on hydroxylated lysine residues. The O-linked glycan consists of a Glc-Gal disaccharide. Forms the fibrils of tendon, ligaments and bones. In bones the fibrils are mineralized with calcium hydroxyapatite.

The protein resides in the secreted. Its subcellular location is the extracellular space. It localises to the extracellular matrix. In terms of biological role, type I collagen is a member of group I collagen (fibrillar forming collagen). This is Collagen alpha-1(I) chain (Col1a1) from Rattus norvegicus (Rat).